The sequence spans 480 residues: Salicylate hydroxylase asL1 (480 aa).

Residues 17-37 (PMEIAIVGGGIVGVILAIGLT) traverse the membrane as a helical segment. 2 residues coordinate FAD: Glu-47 and Ala-60. Asn-87 carries an N-linked (GlcNAc...) asparagine glycan. Arg-131 provides a ligand contact to FAD. Asn-168 is a glycosylation site (N-linked (GlcNAc...) asparagine). Residues Arg-213 and Tyr-246 contribute to the active site. N-linked (GlcNAc...) asparagine glycosylation is present at Asn-250. Residues Asp-329 and Ala-342 each contribute to the FAD site. N-linked (GlcNAc...) asparagine glycans are attached at residues Asn-400 and Asn-464.

Belongs to the paxM FAD-dependent monooxygenase family. Requires FAD as cofactor.

The protein localises to the membrane. Its pathway is secondary metabolite biosynthesis; terpenoid biosynthesis. Its function is as follows. Salicylate hydroxylase; part of the gene cluster that mediates the biosynthesis of xenovulene A, an unusual meroterpenoid that has potent inhibitory effects on the human gamma-aminobutyrate A (GABAA) benzodiazepine receptor. The first step of xenovulene A biosynthesis is the biosynthesis of 3-methylorcinaldehyde performed by the non-reducing polyketide synthase aspks1. The salicylate hydroxylase asL1 then catalyzes the oxidative dearomatization of 3-methylorcinaldehyde to yield a dearomatized hydroxycyclohexadione. The 2-oxoglutarate-dependent dioxygenase asL3 further catalyzes the oxidative ring expansion to provide the first tropolone metabolite. The cytochrome P450 monooxygenase asR2 allows the synthesis of tropolone hemiacetal. In parallel, a previously unrecognised class of terpene cyclase, asR6, produces alpha-humulene from farnesylpyrophosphate (FPP). The putative Diels-Alderase asR5 probably catalyzes the formation of the tropolone-humulene skeleton by linking humulene and the polyketide moiety. Oxidative-ring contractions catalyzed by asL4 and asL6 then processively remove carbon atoms from the polyketide to yield xenovulene A. The polypeptide is Salicylate hydroxylase asL1 (Sarocladium schorii (Acremonium strictum (strain IMI 501407))).